The following is a 520-amino-acid chain: Retinoic acid receptor RXR-beta (520 aa).

The interval Met1 to Lys167 is disordered. The modulating stretch occupies residues Met1–Leu191. Arg25 carries the omega-N-methylarginine modification. The segment covering Glu64 to Ser79 has biased composition (basic and acidic residues). Residues Ser95–Ser118 show a composition bias toward pro residues. A compositionally biased stretch (low complexity) spans Pro119 to Pro130. The span at Gly131 to Phe140 shows a compositional bias: pro residues. 2 NR C4-type zinc fingers span residues Cys192 to Cys212 and Cys228 to Cys252. Residues Cys192–Met257 constitute a DNA-binding region (nuclear receptor). The tract at residues Lys258 to Ile382 is hinge. The segment covering Gln263–Asp275 has biased composition (basic and acidic residues). Disordered regions lie at residues Gln263 to Glu285 and Gln300 to Val323. The NR LBD domain occupies Pro283–Pro516. Gly residues predominate over residues Glu307 to Ser317.

This sequence belongs to the nuclear hormone receptor family. NR2 subfamily. As to quaternary structure, homodimer (in vitro). Heterodimer with other retinoic acid receptor family members. Binds DNA preferentially as a RAR/RXR heterodimer. Interacts with NR1H3. Interacts with AKAP13. As to expression, in all tissues tested, including brain, thymus, spleen and liver.

It localises to the nucleus. The protein localises to the cytoplasm. Receptor for retinoic acid. Retinoic acid receptors bind as heterodimers to their target response elements in response to their ligands, all-trans or 9-cis retinoic acid, and regulate gene expression in various biological processes. The RAR/RXR heterodimers bind to the retinoic acid response elements (RARE). The protein is Retinoic acid receptor RXR-beta (Rxrb) of Mus musculus (Mouse).